Here is a 965-residue protein sequence, read N- to C-terminus: Vacuolar protein sorting-associated protein 54 (965 aa).

Ser8 carries the phosphoserine modification. Residues 228–249 adopt a coiled-coil conformation; it reads ELQDYLKKTSQAVKMLRDKIAQ. Residues 516-558 form a disordered region; that stretch reads ASAAVDTTSQRNTSPHSEPCSSDSVSEPECTTDSSSSKEQTPA. Polar residues predominate over residues 520-558; sequence VDTTSQRNTSPHSEPCSSDSVSEPECTTDSSSSKEQTPA.

The protein belongs to the VPS54 family. In terms of assembly, component of the Golgi-associated retrograde protein (GARP) complex, also called VFT (VPS fifty-three) complex, composed of VPS51, VPS52, VPS53 and VPS54. EIPR1 interacts with GARP complex and mediates its recruitment to the trans-Golgi network. Interacts with VPS51 in an EIPR1-independent manner. In terms of tissue distribution, ubiquitously expressed at low level.

It localises to the golgi apparatus. It is found in the trans-Golgi network. Its subcellular location is the membrane. In terms of biological role, acts as a component of the GARP complex that is involved in retrograde transport from early and late endosomes to the trans-Golgi network (TGN). The GARP complex is required for the maintenance of the cycling of mannose 6-phosphate receptors between the TGN and endosomes, this cycling is necessary for proper lysosomal sorting of acid hydrolases such as CTSD. Within the GARP complex, required to tether the complex to the TGN. Not involved in endocytic recycling. The protein is Vacuolar protein sorting-associated protein 54 (Vps54) of Rattus norvegicus (Rat).